Reading from the N-terminus, the 247-residue chain is MSASVEIFSDSKTMVGAAGKRLASTIQSAVAARERALIVLTGGSSGIGLLRDLATRGQQIDWSRVHLFWGDERYVPKDDDERNEKQARVALLDHIDIPPSQVHPMPAGDGEFGNDLEAAALAYEQLLAAYAAPGYPTPNFDVHLMGMGPEGHINSLFPNTVAVRETSRMVVGVRNSPKPPPERITLTLNAIQRSREVWLMVSGTAKADAVAAAMGGAPSASIPAAGAVGLETTLWLLDEEAAAKIPG.

The protein belongs to the glucosamine/galactosamine-6-phosphate isomerase family. 6-phosphogluconolactonase subfamily.

It catalyses the reaction 6-phospho-D-glucono-1,5-lactone + H2O = 6-phospho-D-gluconate + H(+). Its pathway is carbohydrate degradation; pentose phosphate pathway; D-ribulose 5-phosphate from D-glucose 6-phosphate (oxidative stage): step 2/3. Its function is as follows. Hydrolysis of 6-phosphogluconolactone to 6-phosphogluconate. The chain is 6-phosphogluconolactonase (pgl) from Mycobacterium leprae (strain TN).